The chain runs to 395 residues: Putative transport protein sll0063 (395 aa).

A run of 8 helical transmembrane segments spans residues 24–44, 50–70, 91–111, 180–200, 245–265, 269–289, 295–315, and 328–348; these read LNAI…VLNA, IFGY…IAFL, FVFL…IPLA, VFTV…FYLL, ALGL…LFGL, VMAL…FLVA, MALQ…NGIA, and FWVL…GVIV.

It belongs to the autoinducer-2 exporter (AI-2E) (TC 2.A.86) family.

The protein resides in the cell membrane. The protein is Putative transport protein sll0063 of Synechocystis sp. (strain ATCC 27184 / PCC 6803 / Kazusa).